We begin with the raw amino-acid sequence, 435 residues long: Glutamyl-tRNA reductase (435 aa).

Substrate contacts are provided by residues 49–52, Ser109, 114–116, and Gln120; these read TCNR and ETQ. The active-site Nucleophile is Cys50. Residue 189–194 coordinates NADP(+); it reads GAGEMS.

Belongs to the glutamyl-tRNA reductase family. Homodimer.

The enzyme catalyses (S)-4-amino-5-oxopentanoate + tRNA(Glu) + NADP(+) = L-glutamyl-tRNA(Glu) + NADPH + H(+). Its pathway is porphyrin-containing compound metabolism; protoporphyrin-IX biosynthesis; 5-aminolevulinate from L-glutamyl-tRNA(Glu): step 1/2. Catalyzes the NADPH-dependent reduction of glutamyl-tRNA(Glu) to glutamate 1-semialdehyde (GSA). The polypeptide is Glutamyl-tRNA reductase (Listeria monocytogenes serotype 4b (strain F2365)).